The chain runs to 660 residues: Macrolide export ATP-binding/permease protein MacB (660 aa).

The ABC transporter domain occupies 10–248; it reads LVLENIVRKF…AKGQALQGKQ (239 aa). 46–53 contacts ATP; the sequence is GASGSGKS. Transmembrane regions (helical) follow at residues 285 to 305, 532 to 552, 593 to 613, and 625 to 645; these read FLTM…VALG, ILTL…GIGV, IIGG…FVLF, and SIII…FSPA.

The protein belongs to the ABC transporter superfamily. Macrolide exporter (TC 3.A.1.122) family. In terms of assembly, homodimer.

It localises to the cell inner membrane. Functionally, non-canonical ABC transporter that contains transmembrane domains (TMD), which form a pore in the inner membrane, and an ATP-binding domain (NBD), which is responsible for energy generation. Confers resistance against macrolides. The sequence is that of Macrolide export ATP-binding/permease protein MacB from Bartonella quintana (strain Toulouse) (Rochalimaea quintana).